Consider the following 153-residue polypeptide: Large ribosomal subunit protein uL15 (153 aa).

The interval 21–41 is disordered; that stretch reads RGIGSGKGKTGGRGIKGQKSR. Over residues 23 to 35 the composition is skewed to gly residues; it reads IGSGKGKTGGRGI.

The protein belongs to the universal ribosomal protein uL15 family. As to quaternary structure, part of the 50S ribosomal subunit.

Functionally, binds to the 23S rRNA. In Rickettsia felis (strain ATCC VR-1525 / URRWXCal2) (Rickettsia azadi), this protein is Large ribosomal subunit protein uL15.